Reading from the N-terminus, the 199-residue chain is MAENENTKKRNRREEILQALAHMLQSSDGSHRITTAKLAANVGVSEAALYRHFPSKTRMFDSLIEFIEDSLISRINLILQDEKDTITRIRLILVLILGFSEKNPGLTRIMTGHALMFEQNRLQGRINQLFERIEVQIRQVLKEKKLRDGQGFSYDESLLASQLLAFCEGMLSRFVRSEFHYRPTQEFEARWPLLLAQLQ.

Residues 10–71 enclose the HTH tetR-type domain; sequence RNRREEILQA…SLIEFIEDSL (62 aa). The segment at residues 34–53 is a DNA-binding region (H-T-H motif); the sequence is TTAKLAANVGVSEAALYRHF. A coiled-coil region spans residues 120–140; the sequence is NRLQGRINQLFERIEVQIRQV.

This sequence belongs to the nucleoid occlusion factor SlmA family. Homodimer. Interacts with FtsZ.

It localises to the cytoplasm. It is found in the nucleoid. Functionally, required for nucleoid occlusion (NO) phenomenon, which prevents Z-ring formation and cell division over the nucleoid. Acts as a DNA-associated cell division inhibitor that binds simultaneously chromosomal DNA and FtsZ, and disrupts the assembly of FtsZ polymers. SlmA-DNA-binding sequences (SBS) are dispersed on non-Ter regions of the chromosome, preventing FtsZ polymerization at these regions. This chain is Nucleoid occlusion factor SlmA, found in Photorhabdus laumondii subsp. laumondii (strain DSM 15139 / CIP 105565 / TT01) (Photorhabdus luminescens subsp. laumondii).